A 496-amino-acid chain; its full sequence is Putative aldehyde dehydrogenase-like protein C922.07c (496 aa).

241–246 (GSTKVG) is a binding site for NAD(+). The active-site Proton acceptor is Glu-263. Cys-297 acts as the Nucleophile in catalysis.

This sequence belongs to the aldehyde dehydrogenase family.

The protein resides in the cytoplasm. It is found in the nucleus. This chain is Putative aldehyde dehydrogenase-like protein C922.07c, found in Schizosaccharomyces pombe (strain 972 / ATCC 24843) (Fission yeast).